We begin with the raw amino-acid sequence, 387 residues long: MNREFVEAMQHLALERGVSVEEILEAFKEALRKAYIKRQKGYKKEEIDQGKGPEVDVYIDPNSGRIEMVEVRRVVEKVEDPDKEIALAEALQYDPEVQVGDEMEFPINPEELSRMAIQDLRQILTQRLKESERNRIYNEYKDKEGQVLTGVVTRVDNRGNVFVELGRGEAYLPRSEQIPTEKYHPGQRIKVYLKKVDKSAKGPSLLVSRAHEKLLEHLLKQEVPEIAEGIVEIKAIAREPGRRSKVAVTSHNPNVDPIGACIGHKGQRIQAVSAELGREKVDIILWSKDPKEFIRNALSPAQVGSIELDPEAKKARVKVTKDQHSLAIGTGGQNVRLASKLTGYDIHFEEAEISDLDEALRRAAEEEAEARERKAREEFEKLFRDLG.

The S1 motif domain occupies 145–209 (GQVLTGVVTR…AKGPSLLVSR (65 aa)). One can recognise a KH domain in the interval 312–379 (AKKARVKVTK…ARERKAREEF (68 aa)).

It belongs to the NusA family. In terms of assembly, monomer. Binds directly to the core enzyme of the DNA-dependent RNA polymerase and to nascent RNA.

The protein localises to the cytoplasm. Functionally, participates in both transcription termination and antitermination. In Thermus thermophilus (strain ATCC 27634 / DSM 579 / HB8), this protein is Transcription termination/antitermination protein NusA.